Here is a 389-residue protein sequence, read N- to C-terminus: 8-amino-7-oxononanoate synthase (389 aa).

Arginine 18 contributes to the substrate binding site. Glycine 104–tyrosine 105 contacts pyridoxal 5'-phosphate. Position 129 (histidine 129) interacts with substrate. The pyridoxal 5'-phosphate site is built by serine 176, histidine 204, and threonine 232. Lysine 235 bears the N6-(pyridoxal phosphate)lysine mark. Threonine 351 is a substrate binding site.

The protein belongs to the class-II pyridoxal-phosphate-dependent aminotransferase family. BioF subfamily. Homodimer. It depends on pyridoxal 5'-phosphate as a cofactor.

It carries out the reaction 6-carboxyhexanoyl-[ACP] + L-alanine + H(+) = (8S)-8-amino-7-oxononanoate + holo-[ACP] + CO2. The protein operates within cofactor biosynthesis; biotin biosynthesis. Functionally, catalyzes the decarboxylative condensation of pimeloyl-[acyl-carrier protein] and L-alanine to produce 8-amino-7-oxononanoate (AON), [acyl-carrier protein], and carbon dioxide. The protein is 8-amino-7-oxononanoate synthase of Citrifermentans bemidjiense (strain ATCC BAA-1014 / DSM 16622 / JCM 12645 / Bem) (Geobacter bemidjiensis).